The chain runs to 587 residues: Monocopper oxidase-like protein SKU5 (587 aa).

The signal sequence occupies residues 1–20; that stretch reads MDLFKILLLVFFVNISFCFA. Asn-14 and Asn-58 each carry an N-linked (GlcNAc...) asparagine glycan. His-80 contacts Cu cation. 10 N-linked (GlcNAc...) asparagine glycosylation sites follow: Asn-107, Asn-169, Asn-200, Asn-257, Asn-278, Asn-293, Asn-342, Asn-362, Asn-430, and Asn-444. His-452 contacts Cu cation. Asn-534 carries N-linked (GlcNAc...) asparagine glycosylation. Ser-562 is lipidated: GPI-anchor amidated serine. Residues 563 to 587 constitute a propeptide, removed in mature form; sequence ASKSIGFTSLSMVVMALVMMMMLQH.

Belongs to the multicopper oxidase family. Cu cation serves as cofactor. Expressed in roots, hypocotyls, cotyledons, leaves, stems and flowers.

It localises to the secreted. It is found in the cell wall. The protein localises to the cell membrane. In terms of biological role, may be a monocopper oxidase of unknown specificity. Involved in directional growth processes, possibly by participating in cell wall expansion. The chain is Monocopper oxidase-like protein SKU5 (SKU5) from Arabidopsis thaliana (Mouse-ear cress).